The primary structure comprises 185 residues: Elongation factor P (185 aa).

It belongs to the elongation factor P family.

The protein localises to the cytoplasm. The protein operates within protein biosynthesis; polypeptide chain elongation. Functionally, involved in peptide bond synthesis. Stimulates efficient translation and peptide-bond synthesis on native or reconstituted 70S ribosomes in vitro. Probably functions indirectly by altering the affinity of the ribosome for aminoacyl-tRNA, thus increasing their reactivity as acceptors for peptidyl transferase. The chain is Elongation factor P from Listeria innocua serovar 6a (strain ATCC BAA-680 / CLIP 11262).